Consider the following 159-residue polypeptide: Crossover junction endodeoxyribonuclease RuvC (159 aa).

Residues Asp7, Glu67, and Asp139 contribute to the active site. Asp7, Glu67, and Asp139 together coordinate Mg(2+).

The protein belongs to the RuvC family. As to quaternary structure, homodimer which binds Holliday junction (HJ) DNA. The HJ becomes 2-fold symmetrical on binding to RuvC with unstacked arms; it has a different conformation from HJ DNA in complex with RuvA. In the full resolvosome a probable DNA-RuvA(4)-RuvB(12)-RuvC(2) complex forms which resolves the HJ. It depends on Mg(2+) as a cofactor.

The protein resides in the cytoplasm. It catalyses the reaction Endonucleolytic cleavage at a junction such as a reciprocal single-stranded crossover between two homologous DNA duplexes (Holliday junction).. In terms of biological role, the RuvA-RuvB-RuvC complex processes Holliday junction (HJ) DNA during genetic recombination and DNA repair. Endonuclease that resolves HJ intermediates. Cleaves cruciform DNA by making single-stranded nicks across the HJ at symmetrical positions within the homologous arms, yielding a 5'-phosphate and a 3'-hydroxyl group; requires a central core of homology in the junction. The consensus cleavage sequence is 5'-(A/T)TT(C/G)-3'. Cleavage occurs on the 3'-side of the TT dinucleotide at the point of strand exchange. HJ branch migration catalyzed by RuvA-RuvB allows RuvC to scan DNA until it finds its consensus sequence, where it cleaves and resolves the cruciform DNA. This chain is Crossover junction endodeoxyribonuclease RuvC, found in Orientia tsutsugamushi (strain Ikeda) (Rickettsia tsutsugamushi).